A 202-amino-acid chain; its full sequence is Large ribosomal subunit protein uL4 (202 aa).

The disordered stretch occupies residues 40-71 (GRQGSKAQKTRSQVSGGGKKPWRQKGSGRARA). Polar residues predominate over residues 44-53 (SKAQKTRSQV).

It belongs to the universal ribosomal protein uL4 family. Part of the 50S ribosomal subunit.

In terms of biological role, one of the primary rRNA binding proteins, this protein initially binds near the 5'-end of the 23S rRNA. It is important during the early stages of 50S assembly. It makes multiple contacts with different domains of the 23S rRNA in the assembled 50S subunit and ribosome. Its function is as follows. Forms part of the polypeptide exit tunnel. This is Large ribosomal subunit protein uL4 from Hahella chejuensis (strain KCTC 2396).